A 188-amino-acid chain; its full sequence is Deoxyuridine 5'-triphosphate nucleotidohydrolase (188 aa).

Residues Met1 to Ile34 are disordered.

The protein belongs to the dUTPase family. The cofactor is Mg(2+).

The enzyme catalyses dUTP + H2O = dUMP + diphosphate + H(+). This enzyme is involved in nucleotide metabolism: it produces dUMP, the immediate precursor of thymidine nucleotides and it decreases the intracellular concentration of dUTP so that uracil cannot be incorporated into DNA. The protein is Deoxyuridine 5'-triphosphate nucleotidohydrolase (49) of Ictaluridae (bullhead catfishes).